A 339-amino-acid chain; its full sequence is Glucokinase (339 aa).

Position 16 to 21 (16 to 21 (GDIGGT)) interacts with ATP.

The protein belongs to the bacterial glucokinase family.

It localises to the cytoplasm. The catalysed reaction is D-glucose + ATP = D-glucose 6-phosphate + ADP + H(+). The polypeptide is Glucokinase (Sinorhizobium medicae (strain WSM419) (Ensifer medicae)).